The primary structure comprises 239 residues: Octanoyl-[acyl-carrier-protein]:protein N-octanoyltransferase LIPT2, mitochondrial (239 aa).

The N-terminal 18 residues, 1–18 (MSVPVLRVRRLGLVGYAE), are a transit peptide targeting the mitochondrion. Residues 37 to 217 (GSPGGALLLC…AFEEEFQCQL (181 aa)) enclose the BPL/LPL catalytic domain. Substrate contacts are provided by residues 81–88 (RGGLITFH), 147–149 (AIG), and 160–162 (GLA). Cys-178 serves as the catalytic Acyl-thioester intermediate. The tract at residues 220–239 (EQNPEQNPVQNRPDRDAGPL) is disordered.

The protein belongs to the LipB family.

It is found in the mitochondrion. The catalysed reaction is octanoyl-[ACP] + L-lysyl-[protein] = N(6)-octanoyl-L-lysyl-[protein] + holo-[ACP] + H(+). The protein operates within protein modification; protein lipoylation via endogenous pathway; protein N(6)-(lipoyl)lysine from octanoyl-[acyl-carrier-protein]: step 1/2. Its function is as follows. Catalyzes the transfer of endogenously produced octanoic acid from octanoyl-acyl-carrier-protein (octanoyl-ACP) onto the lipoyl domains of lipoate-dependent enzymes such as the protein H of the glycine cleavage system (GCSH). Lipoyl-ACP can also act as a substrate although octanoyl-ACP is likely to be the physiological substrate. The protein is Octanoyl-[acyl-carrier-protein]:protein N-octanoyltransferase LIPT2, mitochondrial (lipt2) of Xenopus tropicalis (Western clawed frog).